We begin with the raw amino-acid sequence, 166 residues long: MSNNDQKRDEGYIEKLVQVNRVAKTVKGGRIFTFTALTVVGDGKGRVGFGRGKSREVPAAIQKAMEAARRNMIQVDLNGTTLQYAMKSAHGASKVYMQPASEGTGIIAGGAMRAVLEVAGVQNVLAKCYGSTNPVNVVHATFKGLKAMQSPESIAAKRGLRVEEIK.

The S5 DRBM domain occupies 12-75 (YIEKLVQVNR…EAARRNMIQV (64 aa)).

It belongs to the universal ribosomal protein uS5 family. Part of the 30S ribosomal subunit. Contacts proteins S4 and S8.

With S4 and S12 plays an important role in translational accuracy. In terms of biological role, located at the back of the 30S subunit body where it stabilizes the conformation of the head with respect to the body. The chain is Small ribosomal subunit protein uS5 from Pseudomonas fluorescens (strain Pf0-1).